The following is a 606-amino-acid chain: Ectonucleoside triphosphate diphosphohydrolase 7 (606 aa).

The Cytoplasmic portion of the chain corresponds to 1–28; that stretch reads MARISFSYLCPASWYFTVPTVSPFLRQR. A helical transmembrane segment spans residues 29-49; it reads VAFLGLFFIPCVLLLLLIMDL. The Vesicular segment spans residues 50–548; the sequence is RHWATSLPRD…PAHGSWLRLS (499 aa). Glu217 (proton acceptor) is an active-site residue. A glycan (N-linked (GlcNAc...) asparagine) is linked at Asn330. An intrachain disulfide couples Cys448 to Cys477. The chain crosses the membrane as a helical span at residues 549–569; that stretch reads FVYNHYLFFACTLVVLLAIVL. Residues 570 to 606 are Cytoplasmic-facing; sequence YLLRIHRIHRRQTRASAPLDLLWIEQVVPMIGVQVGP.

It belongs to the GDA1/CD39 NTPase family. The cofactor is Ca(2+). Requires Mg(2+) as cofactor. Widely expressed. Expressed at high level in brain, kidney, liver, testis and small intestin. Weakly expressed in lung, thymus and heart.

It is found in the cytoplasmic vesicle membrane. The catalysed reaction is a ribonucleoside 5'-triphosphate + H2O = a ribonucleoside 5'-diphosphate + phosphate + H(+). The enzyme catalyses UTP + H2O = UDP + phosphate + H(+). It carries out the reaction GTP + H2O = GDP + phosphate + H(+). It catalyses the reaction CTP + H2O = CDP + phosphate + H(+). The catalysed reaction is ATP + H2O = ADP + phosphate + H(+). Catalyzes the hydrolysis of nucleoside triphosphates and diphosphates in a calcium- or magnesium-dependent manner. Preferentially hydrolyzes nucleoside 5'-triphosphates, with substrate preference for UTP &gt; GTP &gt; CTP. Hydrolyzes nucleoside diphosphates only to a minor extent. In contrast to its human ortholog is able to hydrolyze ATP. In the epithelial cells of small intestine controls luminal ATP levels, therefore regulating Th17-cell development. This Mus musculus (Mouse) protein is Ectonucleoside triphosphate diphosphohydrolase 7 (Entpd7).